The chain runs to 182 residues: MSNTIETGLPEDWEVRHSQSKNLPYYFNSATKTSRWEPPSGTDVDKLKIYMAKYHSPTSQQQQQQQQQQPQGKIRCAHLLVKHNQSRRPSSWRESEITRTKQEALTTLQGFEQRIKSGSISLGELALTESDCSSARKRGDLGYFGRGDMQKEFEDAAFALKPGEISGIVDTASGLHLIERLE.

A WW domain is found at 7–41 (TGLPEDWEVRHSQSKNLPYYFNSATKTSRWEPPSG). Positions 71 to 182 (QGKIRCAHLL…SGLHLIERLE (112 aa)) constitute a PpiC domain.

The enzyme catalyses [protein]-peptidylproline (omega=180) = [protein]-peptidylproline (omega=0). In terms of biological role, site-specific PPIase with respect to the amino acid N-terminal to the proline residue. Peptides with glutamate, phosphoserine, or phosphothreonine in the -1 position are the best substrates. It is not only able to isomerize small peptides but is also active in protein folding. The protein is Peptidyl-prolyl cis-trans isomerase ssp-1 (ssp-1) of Neurospora crassa (strain ATCC 24698 / 74-OR23-1A / CBS 708.71 / DSM 1257 / FGSC 987).